A 376-amino-acid polypeptide reads, in one-letter code: Integrator complex assembly factor WDR73 (376 aa).

3 WD repeats span residues 84–123 (FSEEPVECLIHIPGTRCLVTSGNSNTLQIWDIGGDDSDVI), 276–316 (ASKN…TESS), and 337–376 (TSPAVVTAHSWHPSRPKTLLSAATDGSLHVWDWVDKITDR). The segment at 316–336 (SSPQPIFSHRGHEMSQEAKSS) is disordered.

It belongs to the WD repeat WDR73 family.

The protein localises to the cytoplasm. It is found in the cytoskeleton. The protein resides in the spindle. It localises to the spindle pole. Its subcellular location is the cleavage furrow. Functionally, component of a multiprotein complex required for the assembly of the RNA endonuclease module of the integrator complex. Associates with ints9 and ints11 in the cytoplasm, stabilizing the ints9-ints11 heterodimer and blocking the active site of ints11. Brat1 then joins the complex and plugs the active site of ints11, leading to wdr73 release and nuclear import of ints9 and ints11. In Danio rerio (Zebrafish), this protein is Integrator complex assembly factor WDR73 (wdr73).